The sequence spans 716 residues: Iron-sulfur clusters transporter atm1, mitochondrial (716 aa).

Residues 1-18 (MAPSIKLSTMATSLHRAH) constitute a mitochondrion transit peptide. The Mitochondrial matrix segment spans residues 19–123 (GTSALLRRPR…PKGSWGDKAR (105 aa)). Residues 57–87 (LFAPNGSAKDESKPAVSTVPKTTGRGPSDPL) are disordered. Residues 124 to 145 (VLLAIGLLVGGKVLNVQVPFYF) form a helical membrane-spanning segment. The ABC transmembrane type-1 domain occupies 124 to 414 (VLLAIGLLVG…LGSVYRELRQ (291 aa)). The Mitochondrial intermembrane portion of the chain corresponds to 146 to 168 (REIVDSLNIDFSTTGGSVTAVAG). Residues 169-192 (AMILGYGAARVGAVVSQELRNAVF) form a helical membrane-spanning segment. Topologically, residues 193–241 (ASVAQKAIRKVARNTFEHLLNLDLSFHLSKQTGGLTRAIDRGTKGISFL) are mitochondrial matrix. A helical membrane pass occupies residues 242–265 (LTSMVFHIVPTALEISMVCGILTY). Asn-266 is a topological domain (mitochondrial intermembrane). A helical transmembrane segment spans residues 267–287 (FGWQYAALTALTMVSYTAFTI). At 288 to 353 (LTTAWRTKFR…NSIKVATSLA (66 aa)) the chain is on the mitochondrial matrix side. Glutathione-binding positions include 293–297 (RTKFR) and 356–359 (NSGQ). Residues 354–372 (FLNSGQNIIFSSALTVMMY) form a helical membrane-spanning segment. The Mitochondrial intermembrane segment spans residues 373 to 387 (MGAHGVATGQLTVGD). Residues 388 to 409 (LVLINQLVFQLSVPLNFLGSVY) traverse the membrane as a helical segment. Gly-406 contributes to the glutathione binding site. The Mitochondrial matrix segment spans residues 410 to 716 (RELRQSLLDM…KEEVGEKKEA (307 aa)). In terms of domain architecture, ABC transporter spans 449–690 (IEFKDVTFGY…NGVYAQLWRA (242 aa)). ATP is bound by residues Tyr-458 and 482–493 (GPSGCGKSTLLR). The interval 697–716 (EEGEVSKKGEKEEVGEKKEA) is disordered. Positions 700–716 (EVSKKGEKEEVGEKKEA) are enriched in basic and acidic residues.

It belongs to the ABC transporter superfamily. ABCB family. Heavy Metal importer (TC 3.A.1.210) subfamily. As to quaternary structure, homodimer.

It is found in the mitochondrion inner membrane. Performs an essential function in the generation of cytoplasmic iron-sulfur proteins by mediating the ATP-dependent export of Fe/S cluster precursors synthesized by egt-3 and other mitochondrial proteins. Hydrolyzes ATP. Binds glutathione and may function by transporting a glutathione-conjugated iron-sulfur compound. The chain is Iron-sulfur clusters transporter atm1, mitochondrial from Neurospora crassa (strain ATCC 24698 / 74-OR23-1A / CBS 708.71 / DSM 1257 / FGSC 987).